The chain runs to 474 residues: tRNA-2-methylthio-N(6)-dimethylallyladenosine synthase (474 aa).

In terms of domain architecture, MTTase N-terminal spans 3–120 (KKLHIKTWGC…LPEMIEQVRR (118 aa)). 6 residues coordinate [4Fe-4S] cluster: Cys12, Cys49, Cys83, Cys157, Cys161, and Cys164. The Radical SAM core domain maps to 143 to 375 (RAEGPTAFVS…QDRITQQAMR (233 aa)). The TRAM domain maps to 378–441 (RHMMGTVQRI…TNSLRGKFIR (64 aa)).

It belongs to the methylthiotransferase family. MiaB subfamily. In terms of assembly, monomer. The cofactor is [4Fe-4S] cluster.

It is found in the cytoplasm. It carries out the reaction N(6)-dimethylallyladenosine(37) in tRNA + (sulfur carrier)-SH + AH2 + 2 S-adenosyl-L-methionine = 2-methylsulfanyl-N(6)-dimethylallyladenosine(37) in tRNA + (sulfur carrier)-H + 5'-deoxyadenosine + L-methionine + A + S-adenosyl-L-homocysteine + 2 H(+). Its function is as follows. Catalyzes the methylthiolation of N6-(dimethylallyl)adenosine (i(6)A), leading to the formation of 2-methylthio-N6-(dimethylallyl)adenosine (ms(2)i(6)A) at position 37 in tRNAs that read codons beginning with uridine. The sequence is that of tRNA-2-methylthio-N(6)-dimethylallyladenosine synthase from Shewanella oneidensis (strain ATCC 700550 / JCM 31522 / CIP 106686 / LMG 19005 / NCIMB 14063 / MR-1).